A 482-amino-acid chain; its full sequence is 2-succinylbenzoate--CoA ligase (482 aa).

Belongs to the ATP-dependent AMP-binding enzyme family. MenE subfamily.

It catalyses the reaction 2-succinylbenzoate + ATP + CoA = 2-succinylbenzoyl-CoA + AMP + diphosphate. Its pathway is quinol/quinone metabolism; 1,4-dihydroxy-2-naphthoate biosynthesis; 1,4-dihydroxy-2-naphthoate from chorismate: step 5/7. It participates in quinol/quinone metabolism; menaquinone biosynthesis. Converts 2-succinylbenzoate (OSB) to 2-succinylbenzoyl-CoA (OSB-CoA). This chain is 2-succinylbenzoate--CoA ligase, found in Bacillus cereus (strain AH820).